Reading from the N-terminus, the 364-residue chain is Ribosomal RNA large subunit methyltransferase F (364 aa).

Residues 1–30 form a disordered region; it reads MTNKRKSAKPLEPAKRAPKPRTKKSRDLSA.

This sequence belongs to the methyltransferase superfamily. METTL16/RlmF family.

It is found in the cytoplasm. The enzyme catalyses adenosine(1618) in 23S rRNA + S-adenosyl-L-methionine = N(6)-methyladenosine(1618) in 23S rRNA + S-adenosyl-L-homocysteine + H(+). Functionally, specifically methylates the adenine in position 1618 of 23S rRNA. This Vibrio vulnificus (strain CMCP6) protein is Ribosomal RNA large subunit methyltransferase F.